The chain runs to 561 residues: Arginine--tRNA ligase (561 aa).

The short motif at 129–139 (ANPTGPLHIGH) is the 'HIGH' region element.

Belongs to the class-I aminoacyl-tRNA synthetase family. In terms of assembly, monomer.

The protein localises to the cytoplasm. The enzyme catalyses tRNA(Arg) + L-arginine + ATP = L-arginyl-tRNA(Arg) + AMP + diphosphate. The sequence is that of Arginine--tRNA ligase from Geotalea uraniireducens (strain Rf4) (Geobacter uraniireducens).